A 952-amino-acid polypeptide reads, in one-letter code: MSILRSSRLLQILLGIIGVVFTVLLVTPGLVVEYFWLSELDYSSVFWTIRGAQVLLFVLVFLVAGLYFGGNFRVLIGNIPPLWASRWAQEGEAPEVGGEPLTRDRLQRLGYVVAGVLSLLFAAGFSGRWNDLLRFWYAGSYGQADPVYGVDLAFYMLELPFLQSLQSAVVGLAFLGLLALVTGYVIAGQIGIQDGGFEADSGALRHLGANLIFLLLGWAWGFYLDLYELLQEGGGAVYGAGYTDVNVVIPALYVMVAATLVLAGLVGLNLYRRRLRLLGIGGAGYLVLLVGGLVLAPSLVTQLTVLPSELQVERPYLENNIDMTREAYALGDFKERSYPAQPDLPADAVEQNEETIDNVRLWDPRLLIDTYRQLQEIRLYYEFYSVDVDRYMLDGDYRQVMVSPRELTQQLPEDTWDNRHVRFTHGYGSVSNLVAREGSEGSPEFLTQDIPPQSKYESLDVDNPALYYGERTPTYRIVPAGVPGDSLELDYPRSGENKYTRYGGEGGVSVGSFWKQLLFSYYMGDFNILLTDYIQDDSQIQFWNQVEERVRHVAPFLKLDKDPYLVHGDDRHYYIADAYTTSNSFPYSEPIRGQQGYQGTRYIRNSVKVVVDAYNGDVSLYVSNPEDPIIQTYQRIFPDLFQPLDAMPELLQNHIRYPQDFFEIQMERYRRYHQTQPQVFYNNEDLWTRPQEQYANQQRKMEPYYILTDLPGKDDAGLEFMLMLPMTPDGRDNMIGWVAARSDPPNYGEVVVYELPKDRLIRGPNQIESRIDQDTEISQQLSLWDQRGSSVIRGNLIVVPIEESFLYVEPIYLIADEIQIPEMQRVIAATDQDVAMKRTLRQSLNSVLGEQVVETRDQALAQMQQAAQTAQAASPEQVEGLERAKELIQEARDALQGGDFATFGDRFDELQQVLNDVPLPDTTGTVPPPTSSDTTGTMTAPTGDVSEVTGGS.

Transmembrane regions (helical) follow at residues 12 to 32 (ILLG…GLVV), 52 to 72 (AQVL…GGNF), 109 to 129 (LGYV…SGRW), 168 to 188 (AVVG…VIAG), 207 to 227 (LGAN…LDLY), 247 to 267 (VVIP…GLVG), and 277 to 297 (LLGI…VLAP). The interval 917–952 (VPLPDTTGTVPPPTSSDTTGTMTAPTGDVSEVTGGS) is disordered. Positions 931 to 940 (SSDTTGTMTA) are enriched in polar residues.

It belongs to the UPF0182 family.

The protein localises to the cell membrane. The protein is UPF0182 protein SRU_2225 of Salinibacter ruber (strain DSM 13855 / M31).